Reading from the N-terminus, the 269-residue chain is Interleukin-1 beta (269 aa).

Residues 1–116 (MAEVPELASE…TRNNDACVHD (116 aa)) constitute a propeptide that is removed on maturation.

The protein belongs to the IL-1 family. Monomer. In its precursor form, weakly interacts with full-length MEFV; the mature cytokine does not interact at all. Interacts with integrins ITGAV:ITGBV and ITGA5:ITGB1; integrin-binding is required for IL1B signaling. Interacts with cargo receptor TMED10; the interaction is direct and is required for the secretion of IL1B mature form. Interacts with HSP90AB1; the interaction facilitates cargo translocation into the ERGIC. Interacts with HSP90B1; the interaction facilitates cargo translocation into the ERGIC.

It is found in the cytoplasm. The protein localises to the cytosol. The protein resides in the secreted. It localises to the lysosome. Its subcellular location is the extracellular exosome. Its function is as follows. Potent pro-inflammatory cytokine. Initially discovered as the major endogenous pyrogen, induces prostaglandin synthesis, neutrophil influx and activation, T-cell activation and cytokine production, B-cell activation and antibody production, and fibroblast proliferation and collagen production. Promotes Th17 differentiation of T-cells. Synergizes with IL12/interleukin-12 to induce IFNG synthesis from T-helper 1 (Th1) cells. Plays a role in angiogenesis by inducing VEGF production synergistically with TNF and IL6. Involved in transduction of inflammation downstream of pyroptosis: its mature form is specifically released in the extracellular milieu by passing through the gasdermin-D (GSDMD) pore. This is Interleukin-1 beta (IL1B) from Macaca nemestrina (Pig-tailed macaque).